Reading from the N-terminus, the 343-residue chain is L-idonate 5-dehydrogenase (NAD(P)(+)) (343 aa).

7 residues coordinate Zn(2+): C40, H65, C93, C96, C99, C107, and E153.

Belongs to the zinc-containing alcohol dehydrogenase family. It depends on Zn(2+) as a cofactor.

The enzyme catalyses L-idonate + NADP(+) = 5-dehydro-D-gluconate + NADPH + H(+). The catalysed reaction is L-idonate + NAD(+) = 5-dehydro-D-gluconate + NADH + H(+). Its pathway is carbohydrate acid metabolism; L-idonate degradation. Functionally, catalyzes the NADH/NADPH-dependent oxidation of L-idonate to 5-ketogluconate (5KG). The polypeptide is L-idonate 5-dehydrogenase (NAD(P)(+)) (idnD) (Escherichia coli (strain K12)).